The chain runs to 142 residues: Hemoglobin subunit alpha (142 aa).

An N-acetylserine modification is found at serine 1. Positions 1-142 (SLSDKDKAVV…LALALSEKYR (142 aa)) constitute a Globin domain. Histidine 59 contributes to the O2 binding site. Position 88 (histidine 88) interacts with heme b.

The protein belongs to the globin family. In terms of assembly, heterotetramer of two alpha chains and two beta chains. In terms of tissue distribution, red blood cells.

Functionally, involved in oxygen transport from gills to the various peripheral tissues. In Carassius auratus (Goldfish), this protein is Hemoglobin subunit alpha (hba).